The chain runs to 37 residues: Diptericin (37 aa).

Positions 1-37 (DLHIPPPDNKINWPQLSGGGGGSPKTGYDININAQQK) are disordered.

The protein belongs to the attacin/sarcotoxin-2 family. In terms of tissue distribution, synthesized by the fat body and secreted into the hemolymph.

Its subcellular location is the secreted. Acute phase protein with antibacterial activity against the Gram-negative bacteria E.coli (MIC=6.25 ug/ml) and S.sonnei (MIC=12.5 ug/ml). Lacks antibacterial activity against the Gram-negative bacteria P.vulgaris, P.rettgeri and P.aeruginosa, and against the Gram-positive bacteria B.subtilis, S.aureus, M.luteus, B.megaterium, C.bovis and E.cloacae. This chain is Diptericin, found in Sarcophaga peregrina (Flesh fly).